Here is a 191-residue protein sequence, read N- to C-terminus: UPF0312 protein Sbal_3041 (191 aa).

Positions 1–22 (MKKQLLSALIGASLLAPMAASA) are cleaved as a signal peptide.

This sequence belongs to the UPF0312 family. Type 1 subfamily.

Its subcellular location is the periplasm. This is UPF0312 protein Sbal_3041 from Shewanella baltica (strain OS155 / ATCC BAA-1091).